The following is a 369-amino-acid chain: p21-activated protein kinase-interacting protein 1-like (369 aa).

WD repeat units lie at residues 33-70 (AHTASLSAVAVNSKYVVTGSRDESIQIYDMRKKVEHGA), 73-111 (QHNGTITCLEFYGTAHLLSGAEDGLICIWNTKRWECLKS), 114-153 (AHKGHVTSLSIHPSGKLALSVGTDKTLRTWNLVEGRSAFI), 195-233 (TIEKRISSIRFITDSVLAIAGDDEIIRFYSCDSQKCLCE), and 236-278 (AREN…NNVP). Residues 311 to 369 (ATSTEANESEKPSAVKKKKVCGMNKSGKLTKQRRRIVPAKRKLEAPLQKKKKKKQNSSE) are disordered. Basic residues-rich tracts occupy residues 338–350 (KLTKQRRRIVPAK) and 358–369 (QKKKKKKQNSSE).

It localises to the nucleus. The protein resides in the nucleolus. In terms of biological role, negatively regulates the PAK1 kinase. PAK1 is a member of the PAK kinase family, which has been shown to play a positive role in the regulation of signaling pathways involving MAPK8 and RELA. PAK1 exists as an inactive homodimer, which is activated by binding of small GTPases such as CDC42 to an N-terminal regulatory domain. PAK1IP1 also binds to the N-terminus of PAK1, and inhibits the specific activation of PAK1 by CDC42. May be involved in ribosomal large subunit assembly. This Gallus gallus (Chicken) protein is p21-activated protein kinase-interacting protein 1-like (PAK1IP1).